Consider the following 154-residue polypeptide: Endoribonuclease YbeY (154 aa).

Residues His118, His122, and His128 each coordinate Zn(2+).

The protein belongs to the endoribonuclease YbeY family. Requires Zn(2+) as cofactor.

It localises to the cytoplasm. Its function is as follows. Single strand-specific metallo-endoribonuclease involved in late-stage 70S ribosome quality control and in maturation of the 3' terminus of the 16S rRNA. The polypeptide is Endoribonuclease YbeY (Chloroflexus aurantiacus (strain ATCC 29366 / DSM 635 / J-10-fl)).